Here is a 312-residue protein sequence, read N- to C-terminus: sn-1-specific diacylglycerol lipase ABHD11 (312 aa).

Residues 1 to 14 constitute a mitochondrion transit peptide; the sequence is MITFKSFHCSRGWH. The region spanning 62-297 is the AB hydrolase-1 domain; the sequence is PPLVLLHGLF…GAGHWVHADK (236 aa). Active-site charge relay system residues include Ser-136, Glu-232, and His-291.

Belongs to the AB hydrolase superfamily. Phosphorylated.

The protein resides in the mitochondrion. Its subcellular location is the mitochondrion matrix. It catalyses the reaction 1-octadecanoyl-2-(5Z,8Z,11Z,14Z-eicosatetraenoyl)-sn-glycerol + H2O = 2-(5Z,8Z,11Z,14Z-eicosatetraenoyl)-glycerol + octadecanoate + H(+). It carries out the reaction a 1,2-diacyl-sn-glycerol + H2O = a 2-acylglycerol + a fatty acid + H(+). The enzyme catalyses a 1,3-diacyl-sn-glycerol + H2O = a 1-acyl-sn-glycerol + a fatty acid + H(+). The catalysed reaction is 1-octadecanoyl-2-(9Z-octadecenoyl)-sn-glycerol + H2O = 2-(9Z-octadecenoyl)-glycerol + octadecanoate + H(+). It catalyses the reaction 1-octadecanoyl-2-(4Z,7Z,10Z,13Z,16Z,19Z-docosahexaenoyl)-sn-glycerol + H2O = 2-(4Z,7Z,10Z,13Z,16Z,19Z-docosahexaenoyl)-glycerol + octadecanoate + H(+). It carries out the reaction 1,2-didecanoylglycerol + H2O = decanoylglycerol + decanoate + H(+). Catalyzes the hydrolysis of diacylglycerol in vitro and may function as a key regulator in lipid metabolism, namely by regulating the intracellular levels of diacylglycerol. 1,2-diacyl-sn-glycerols are the preferred substrate over 1,3-diacyl-sn-glycerols. The enzyme hydrolyzes stearate in preference to palmitate from the sn-1 position of 1,2-diacyl-sn-glycerols. This chain is sn-1-specific diacylglycerol lipase ABHD11, found in Xenopus laevis (African clawed frog).